Reading from the N-terminus, the 206-residue chain is Small ribosomal subunit protein uS4 (206 aa).

The tract at residues 28-52 (YLDRRPYAPGQHGQRRGRGRPSDYS) is disordered. The S4 RNA-binding domain maps to 96–171 (RRLDNVVFRM…QKRRRVSPWI (76 aa)).

It belongs to the universal ribosomal protein uS4 family. In terms of assembly, part of the 30S ribosomal subunit. Contacts protein S5. The interaction surface between S4 and S5 is involved in control of translational fidelity.

Functionally, one of the primary rRNA binding proteins, it binds directly to 16S rRNA where it nucleates assembly of the body of the 30S subunit. Its function is as follows. With S5 and S12 plays an important role in translational accuracy. The protein is Small ribosomal subunit protein uS4 of Deinococcus geothermalis (strain DSM 11300 / CIP 105573 / AG-3a).